The following is a 2080-amino-acid chain: Dedicator of cytokinesis protein 6 (2080 aa).

Positions 20–31 (EVRKQVSRERSG) are enriched in basic and acidic residues. Disordered regions lie at residues 20 to 44 (EVRKQVSRERSGSPHSSRRSSSSLG), 156 to 189 (QDTPGDERTGPEDVDDPQHCSGSPEDTPRSSGAS), and 408 to 441 (PQDRDSDSEGERRPTWAERRRRGPQDRGYSGDDA). Positions 32 to 42 (SPHSSRRSSSS) are enriched in low complexity. The residue at position 178 (Ser-178) is a Phosphoserine. The span at 408 to 425 (PQDRDSDSEGERRPTWAE) shows a compositional bias: basic and acidic residues. A C2 DOCK-type domain is found at 546–712 (RNLLFVYPHS…GVFSVELTAV (167 aa)). Arg-863 bears the Omega-N-methylarginine mark. 3 positions are modified to phosphoserine: Ser-870, Ser-878, and Ser-882. Residues 1101 to 1123 (ASPSPSVSSTTSQSSTFSSQAPD) form a disordered region. Residues 1104 to 1122 (SPSVSSTTSQSSTFSSQAP) show a composition bias toward low complexity. Phosphoserine is present on Ser-1341. The 437-residue stretch at 1620–2056 (RGYQGSPDLR…LQPLLTQRLP (437 aa)) folds into the DOCKER domain. The residue at position 2064 (Thr-2064) is a Phosphothreonine. Phosphoserine is present on residues Ser-2065 and Ser-2069.

It belongs to the DOCK family. Widely expressed with highest levels in lung and heart.

It localises to the cytoplasm. The protein resides in the perinuclear region. Functionally, acts as a guanine nucleotide exchange factor (GEF) for CDC42 and RAC1 small GTPases. Through its activation of CDC42 and RAC1, regulates neurite outgrowth in an vitro differentiation system. This Mus musculus (Mouse) protein is Dedicator of cytokinesis protein 6 (Dock6).